Here is an 87-residue protein sequence, read N- to C-terminus: Lipid-anchored plasma membrane protein uvi15 (87 aa).

The segment at 1–64 (MSAQQFYGDK…MYVQQPQASD (64 aa)) is disordered. Low complexity predominate over residues 18 to 41 (QQAYGGPNYYPPQQNYPQQGYAPP).

The protein belongs to the CYSTM1 family. Post-translationally, palmitoylated.

It localises to the cell membrane. Its subcellular location is the cell tip. Required for the maintenance of viability of cells in stationary phase and in starvation conditions. This is Lipid-anchored plasma membrane protein uvi15 (uvi15) from Schizosaccharomyces pombe (strain 972 / ATCC 24843) (Fission yeast).